The primary structure comprises 356 residues: tRNA pseudouridine synthase D (356 aa).

The active-site Nucleophile is Asp84. Residues 159 to 302 (GVPNYYGPQR…RRGARRPIRV (144 aa)) enclose the TRUD domain.

It belongs to the pseudouridine synthase TruD family.

It catalyses the reaction uridine(13) in tRNA = pseudouridine(13) in tRNA. Responsible for synthesis of pseudouridine from uracil-13 in transfer RNAs. This Thermus thermophilus (strain ATCC BAA-163 / DSM 7039 / HB27) protein is tRNA pseudouridine synthase D.